The primary structure comprises 660 residues: Rhamnogalacturonate lyase B (660 aa).

Residues 1-18 (MRLGVCFSLAAAASVARA) form the signal peptide. N-linked (GlcNAc...) asparagine glycans are attached at residues N25, N109, N142, and N284. Residues 446 to 466 (RLGTPDKSSGEFRHGAARDPT) form a disordered region. Residues 453 to 466 (SSGEFRHGAARDPT) are compositionally biased toward basic and acidic residues. N-linked (GlcNAc...) asparagine glycosylation is found at N524, N566, and N635.

This sequence belongs to the polysaccharide lyase 4 family.

It localises to the secreted. The enzyme catalyses Endotype eliminative cleavage of L-alpha-rhamnopyranosyl-(1-&gt;4)-alpha-D-galactopyranosyluronic acid bonds of rhamnogalacturonan I domains in ramified hairy regions of pectin leaving L-rhamnopyranose at the reducing end and 4-deoxy-4,5-unsaturated D-galactopyranosyluronic acid at the non-reducing end.. In terms of biological role, pectinolytic enzymes consist of four classes of enzymes: pectin lyase, polygalacturonase, pectin methylesterase and rhamnogalacturonase. Degrades the rhamnogalacturonan I (RG-I) backbone of pectin. Active against linseed rhamnogalacturonan. In Emericella nidulans (strain FGSC A4 / ATCC 38163 / CBS 112.46 / NRRL 194 / M139) (Aspergillus nidulans), this protein is Rhamnogalacturonate lyase B (rglB).